The primary structure comprises 555 residues: Glutamine--tRNA ligase (555 aa).

A 'HIGH' region motif is present at residues 34–44 (PEPNGYLHIGH). ATP is bound by residues 35 to 37 (EPN) and 41 to 47 (HIGHAKS). D67 and Y212 together coordinate L-glutamine. ATP is bound by residues T231, 261 to 262 (RL), and 269 to 271 (MSK). The 'KMSKS' region motif lies at 268–272 (IMSKR).

The protein belongs to the class-I aminoacyl-tRNA synthetase family. Monomer.

The protein localises to the cytoplasm. It catalyses the reaction tRNA(Gln) + L-glutamine + ATP = L-glutaminyl-tRNA(Gln) + AMP + diphosphate. The chain is Glutamine--tRNA ligase from Yersinia pseudotuberculosis serotype O:3 (strain YPIII).